Reading from the N-terminus, the 120-residue chain is Ribonuclease P protein component (120 aa).

This sequence belongs to the RnpA family. As to quaternary structure, consists of a catalytic RNA component (M1 or rnpB) and a protein subunit.

It carries out the reaction Endonucleolytic cleavage of RNA, removing 5'-extranucleotides from tRNA precursor.. Its function is as follows. RNaseP catalyzes the removal of the 5'-leader sequence from pre-tRNA to produce the mature 5'-terminus. It can also cleave other RNA substrates such as 4.5S RNA. The protein component plays an auxiliary but essential role in vivo by binding to the 5'-leader sequence and broadening the substrate specificity of the ribozyme. This chain is Ribonuclease P protein component, found in Mycobacterium leprae (strain Br4923).